A 49-amino-acid chain; its full sequence is Large ribosomal subunit protein bL33 (49 aa).

Belongs to the bacterial ribosomal protein bL33 family.

This is Large ribosomal subunit protein bL33 from Caldanaerobacter subterraneus subsp. tengcongensis (strain DSM 15242 / JCM 11007 / NBRC 100824 / MB4) (Thermoanaerobacter tengcongensis).